Consider the following 143-residue polypeptide: Large ribosomal subunit protein uL11 (143 aa).

It belongs to the universal ribosomal protein uL11 family. As to quaternary structure, part of the ribosomal stalk of the 50S ribosomal subunit. Interacts with L10 and the large rRNA to form the base of the stalk. L10 forms an elongated spine to which L12 dimers bind in a sequential fashion forming a multimeric L10(L12)X complex. In terms of processing, one or more lysine residues are methylated.

Functionally, forms part of the ribosomal stalk which helps the ribosome interact with GTP-bound translation factors. The chain is Large ribosomal subunit protein uL11 from Halorhodospira halophila (strain DSM 244 / SL1) (Ectothiorhodospira halophila (strain DSM 244 / SL1)).